The sequence spans 117 residues: MILTALSSAIALLVPIIILGAAWVLASRSTEDREKSSPFECGFDPKSTARIPFSTRFFLLAIIFIVFDIEIVLLMPLPTILHTSDVFTTVTTSVLFLMILLIGLIHEWKEGSLDWSS.

The next 3 membrane-spanning stretches (helical) occupy residues 5 to 25, 57 to 77, and 86 to 106; these read ALSS…AWVL, FFLL…LMPL, and VFTT…GLIH.

The protein belongs to the complex I subunit 3 family.

It is found in the mitochondrion membrane. It catalyses the reaction a ubiquinone + NADH + 5 H(+)(in) = a ubiquinol + NAD(+) + 4 H(+)(out). In terms of biological role, core subunit of the mitochondrial membrane respiratory chain NADH dehydrogenase (Complex I) that is believed to belong to the minimal assembly required for catalysis. Complex I functions in the transfer of electrons from NADH to the respiratory chain. The immediate electron acceptor for the enzyme is believed to be ubiquinone. The protein is NADH-ubiquinone oxidoreductase chain 3 (ND3) of Lumbricus terrestris (Common earthworm).